We begin with the raw amino-acid sequence, 411 residues long: Argininosuccinate synthase (411 aa).

Residue 11–19 (AYSGGLDTS) participates in ATP binding. Residue Y88 coordinates L-citrulline. G118 is an ATP binding site. L-aspartate is bound by residues T120, N124, and D125. Residue N124 participates in L-citrulline binding. L-citrulline is bound by residues R128, S176, E261, and Y273.

The protein belongs to the argininosuccinate synthase family. Type 1 subfamily. As to quaternary structure, homotetramer.

Its subcellular location is the cytoplasm. The catalysed reaction is L-citrulline + L-aspartate + ATP = 2-(N(omega)-L-arginino)succinate + AMP + diphosphate + H(+). It participates in amino-acid biosynthesis; L-arginine biosynthesis; L-arginine from L-ornithine and carbamoyl phosphate: step 2/3. This is Argininosuccinate synthase from Lactiplantibacillus plantarum (strain ATCC BAA-793 / NCIMB 8826 / WCFS1) (Lactobacillus plantarum).